A 221-amino-acid polypeptide reads, in one-letter code: Guanylate kinase (221 aa).

The Guanylate kinase-like domain occupies glycine 18–leucine 196. Residue serine 25–serine 32 participates in ATP binding.

Belongs to the guanylate kinase family.

The protein localises to the cytoplasm. The catalysed reaction is GMP + ATP = GDP + ADP. Functionally, essential for recycling GMP and indirectly, cGMP. This Bartonella quintana (strain Toulouse) (Rochalimaea quintana) protein is Guanylate kinase.